A 440-amino-acid polypeptide reads, in one-letter code: MLRLQSLGSLPAHAEPAWTVSFNPTRSLLASCSTDRTIRLYSYIIPSSSDGLPSQDDSQAVFSLAKVIETDHKRTVRSIAWSPDGRTLASGSFDSTVGVWEEVIPLSDDEEEEDEGAQGVYKPAGVDSDGDGDGGKEKEWECVTTLEGHESECKSVGFSSDGALLASCSRDKSVWVWEVQPDADFECIAVMMEHSQDVKSIAWHPHEEILASASYDSYIHLAYDDPDSDWCIFQKLHPSLPSTPLTIPSTSPSHLIDALVPTEEEKKAEAELQVPPLEEDETVWCLAWSPDGRWLASGGDNGGIRLWQRTGSQPDSAFKEILHTAAHSRSVFSLSWSPPYPSAESAGSTDSTDLGMLASAGEDGKIIIWQITVPPSPSSASQEIDNEQISIRPIAAQKDAHGVNDINSVAWCVREDKKGWGMLSSAGDDGSVKVWRVVRD.

WD repeat units follow at residues 12 to 51 (AHAE…SSDG), 71 to 110 (DHKR…SDDE), 148 to 187 (GHES…DFEC), 193 to 233 (EHSQ…WCIF), 278 to 317 (EEDE…PDSA), 326 to 379 (AHSR…SPSS), and 401 to 440 (HGVN…VVRD). The span at 107 to 116 (SDDEEEEDEG) shows a compositional bias: acidic residues. Positions 107 to 137 (SDDEEEEDEGAQGVYKPAGVDSDGDGDGGKE) are disordered.

This sequence belongs to the WD repeat CIA1 family.

Its function is as follows. Essential component of the cytosolic iron-sulfur (Fe/S) protein assembly machinery. Required for the maturation of extramitochondrial Fe/S proteins. The sequence is that of Probable cytosolic iron-sulfur protein assembly protein 1 from Cryptococcus neoformans var. neoformans serotype D (strain B-3501A) (Filobasidiella neoformans).